The sequence spans 172 residues: Small ribosomal subunit protein uS5 (172 aa).

The S5 DRBM domain occupies 16–79; sequence LKEKLVHINR…EDGKKNVVKV (64 aa).

The protein belongs to the universal ribosomal protein uS5 family. As to quaternary structure, part of the 30S ribosomal subunit. Contacts proteins S4 and S8.

In terms of biological role, with S4 and S12 plays an important role in translational accuracy. Functionally, located at the back of the 30S subunit body where it stabilizes the conformation of the head with respect to the body. The chain is Small ribosomal subunit protein uS5 from Prosthecochloris aestuarii (strain DSM 271 / SK 413).